The following is a 169-amino-acid chain: Regulator of sigma D (169 aa).

It belongs to the Rsd/AlgQ family. In terms of assembly, interacts with RpoD.

Its subcellular location is the cytoplasm. In terms of biological role, binds RpoD and negatively regulates RpoD-mediated transcription activation by preventing the interaction between the primary sigma factor RpoD with the catalytic core of the RNA polymerase and with promoter DNA. May be involved in replacement of the RNA polymerase sigma subunit from RpoD to RpoS during the transition from exponential growth to the stationary phase. This Yersinia pestis protein is Regulator of sigma D.